A 144-amino-acid polypeptide reads, in one-letter code: Large ribosomal subunit protein uL16 (144 aa).

Over residues 1 to 19 (MLLPKRVKYRRQHRPKTTG) the composition is skewed to basic residues. The interval 1–23 (MLLPKRVKYRRQHRPKTTGRSKG) is disordered.

Belongs to the universal ribosomal protein uL16 family. Part of the 50S ribosomal subunit.

Its function is as follows. Binds 23S rRNA and is also seen to make contacts with the A and possibly P site tRNAs. The protein is Large ribosomal subunit protein uL16 of Staphylococcus aureus (strain Mu50 / ATCC 700699).